Reading from the N-terminus, the 292-residue chain is Protoheme IX farnesyltransferase (292 aa).

8 consecutive transmembrane segments (helical) span residues 15-35 (YLVL…LGGM), 49-69 (FWTL…NMVI), 104-124 (VFSL…LVAL), 147-167 (IGGI…SGSV), 171-191 (AIAL…VLAL), 218-238 (TLLY…TGLV), 242-262 (YFVV…KFFF), and 271-291 (LFFF…VDMV).

Belongs to the UbiA prenyltransferase family. Protoheme IX farnesyltransferase subfamily.

It is found in the cell inner membrane. The catalysed reaction is heme b + (2E,6E)-farnesyl diphosphate + H2O = Fe(II)-heme o + diphosphate. It functions in the pathway porphyrin-containing compound metabolism; heme O biosynthesis; heme O from protoheme: step 1/1. Its function is as follows. Converts heme B (protoheme IX) to heme O by substitution of the vinyl group on carbon 2 of heme B porphyrin ring with a hydroxyethyl farnesyl side group. This is Protoheme IX farnesyltransferase from Aquifex aeolicus (strain VF5).